The sequence spans 810 residues: Ecotropic viral integration site 5 protein homolog (810 aa).

The segment at 1–483 (MVTNKMTAAF…EAESQCALKE (483 aa)) is interaction with alpha-tubulin, gamma-tubulin, BIRC5 and FBXO5. Disordered stretches follow at residues 49–80 (VASP…QLSP) and 98–123 (TDSK…SSSA). Positions 51 to 80 (SPSTSLHTTSSSTTLSTPALSPSSPSQLSP) are enriched in low complexity. Ser-102 and Ser-113 each carry phosphoserine. Residues 103–123 (LRSVNGSRRNSGSSLVSSSSA) show a composition bias toward low complexity. A dimerization region spans residues 128-693 (SHLEEDSWIL…LNKSDSNQYI (566 aa)). Residues 163-348 (GIPHHFRAIV…RIFDIFMSEG (186 aa)) enclose the Rab-GAP TBC domain. The segment at 377-810 (QHFQKVIPHQ…RRRESYSTTV (434 aa)) is targeting to the centrosomes. Positions 406 to 716 (KKMKKLEKEY…LRCLKGQRGF (311 aa)) form a coiled coil. An interaction with AURKB and INCENP region spans residues 487 to 810 (KVLDIEKRNN…RRRESYSTTV (324 aa)). A phosphoserine mark is found at Ser-497, Ser-689, Ser-776, and Ser-778. A disordered region spans residues 756–810 (GFPLHGKSGSMSLDPAVADGSESETEDSVLETRESNQVVQKERPPRRRESYSTTV). The segment covering 785–810 (LETRESNQVVQKERPPRRRESYSTTV) has biased composition (basic and acidic residues).

In terms of assembly, dimeric and monomeric. Interacts with alpha- and gamma-tubulin. Interacts with FBXO5. Interacts with the chromosome passenger complex (CPC) which is at least composed of AURKB/aurora-B, BIRC5/survivin, CDCA8/borealin and INCENP. Post-translationally, probably phosphorylated by PLK1; may be required for degradation during mitosis. Ubiquitinated. Degradation during prophase is ubiquitin-dependent. Expressed in various cell lines (at protein level). Expressed in a wide range of tissues including brain and adrenal.

The protein localises to the nucleus. It is found in the cytoplasm. Its subcellular location is the cytoskeleton. It localises to the microtubule organizing center. The protein resides in the centrosome. The protein localises to the spindle. Its function is as follows. Functions as a regulator of cell cycle progression by stabilizing the FBXO5 protein and promoting cyclin-A accumulation during interphase. May play a role in cytokinesis. The chain is Ecotropic viral integration site 5 protein homolog (EVI5) from Homo sapiens (Human).